Consider the following 497-residue polypeptide: Glucose-6-phosphate 1-dehydrogenase (497 aa).

NADP(+) is bound by residues 15-22, arginine 49, and lysine 153; that span reads GASGDLSK. D-glucose 6-phosphate is bound by residues lysine 153, 183-187, glutamate 221, and aspartate 240; that span reads HYLGK. Residue histidine 245 is the Proton acceptor of the active site. Arginine 336 serves as a coordination point for NADP(+). Lysine 339 contacts D-glucose 6-phosphate. 3 residues coordinate NADP(+): lysine 345, arginine 349, and arginine 371. A D-glucose 6-phosphate-binding site is contributed by glutamine 373. Residues 379–381, 399–401, and arginine 466 each bind NADP(+); these read YLK and DLT.

This sequence belongs to the glucose-6-phosphate dehydrogenase family.

It catalyses the reaction D-glucose 6-phosphate + NADP(+) = 6-phospho-D-glucono-1,5-lactone + NADPH + H(+). The protein operates within carbohydrate degradation; pentose phosphate pathway; D-ribulose 5-phosphate from D-glucose 6-phosphate (oxidative stage): step 1/3. In terms of biological role, catalyzes the rate-limiting step of the oxidative pentose-phosphate pathway, which represents a route for the dissimilation of carbohydrates besides glycolysis. The main function of this enzyme is to provide reducing power (NADPH) and pentose phosphates for fatty acid and nucleic acid synthesis. The polypeptide is Glucose-6-phosphate 1-dehydrogenase (ZWF) (Kluyveromyces lactis (strain ATCC 8585 / CBS 2359 / DSM 70799 / NBRC 1267 / NRRL Y-1140 / WM37) (Yeast)).